Consider the following 477-residue polypeptide: MPKAAASLASLLPQLWHRPVQPPPFLHRALSSSSPLLRRHRAALHSPAAPLSAAAVSTSAATVEAPATAAYPVYGRLLPCPLQDDPPRIEHLVAREDEVAVDFISRSLTLPPLYVADLIKFGAVYYALVAPQPPPHAAPEHVRIFREVTEPSVLCRRKSIKGKTVREAQKTFRVTDPNQRLEAGTYLRVHVHPKRFPRCYEIDWKSRVIAVTDNYVVLDKPAATSVGGATDNIEESCVVFTSRALGLETPLMTTHQIDNCSEGCVVLSKTKEFCSVFHGMIREKQVNKRYLALTTAPVSTGIITHYMRPINRAPRLVSEDHIKGWHVCQMEILDCKKVPWPSSLIRKVHKVDNCGWPQQEAAYECKINLLTGKTHQIRAQLAAIGTPIVGDSAYMTAAMAAIVNPSINPFGRWGQNYDSEDEKAAAVEAWISCHGKEPKSVIGLQASEISWDYEGEHHSYKAGVPWWRQDAVESDLI.

The transit peptide at 1–52 directs the protein to the chloroplast; that stretch reads MPKAAASLASLLPQLWHRPVQPPPFLHRALSSSSPLLRRHRAALHSPAAPLS. One can recognise an S4 RNA-binding domain in the interval 98–205; sequence EVAVDFISRS…FPRCYEIDWK (108 aa). The active site involves D258.

It belongs to the pseudouridine synthase RluA family.

It localises to the plastid. It is found in the chloroplast. The enzyme catalyses a uridine in RNA = a pseudouridine in RNA. The protein is RNA pseudouridine synthase 6, chloroplastic of Oryza sativa subsp. japonica (Rice).